The primary structure comprises 564 residues: Dihydroxy-acid dehydratase (564 aa).

Mg(2+) is bound at residue Asp-80. Cys-121 contacts [2Fe-2S] cluster. Residues Asp-122 and Lys-123 each contribute to the Mg(2+) site. Lys-123 is modified (N6-carboxylysine). [2Fe-2S] cluster is bound at residue Cys-194. Residue Glu-447 participates in Mg(2+) binding. Ser-473 acts as the Proton acceptor in catalysis.

This sequence belongs to the IlvD/Edd family. As to quaternary structure, homodimer. [2Fe-2S] cluster is required as a cofactor. Requires Mg(2+) as cofactor.

It catalyses the reaction (2R)-2,3-dihydroxy-3-methylbutanoate = 3-methyl-2-oxobutanoate + H2O. It carries out the reaction (2R,3R)-2,3-dihydroxy-3-methylpentanoate = (S)-3-methyl-2-oxopentanoate + H2O. Its pathway is amino-acid biosynthesis; L-isoleucine biosynthesis; L-isoleucine from 2-oxobutanoate: step 3/4. It functions in the pathway amino-acid biosynthesis; L-valine biosynthesis; L-valine from pyruvate: step 3/4. Its function is as follows. Functions in the biosynthesis of branched-chain amino acids. Catalyzes the dehydration of (2R,3R)-2,3-dihydroxy-3-methylpentanoate (2,3-dihydroxy-3-methylvalerate) into 2-oxo-3-methylpentanoate (2-oxo-3-methylvalerate) and of (2R)-2,3-dihydroxy-3-methylbutanoate (2,3-dihydroxyisovalerate) into 2-oxo-3-methylbutanoate (2-oxoisovalerate), the penultimate precursor to L-isoleucine and L-valine, respectively. In Listeria welshimeri serovar 6b (strain ATCC 35897 / DSM 20650 / CCUG 15529 / CIP 8149 / NCTC 11857 / SLCC 5334 / V8), this protein is Dihydroxy-acid dehydratase.